We begin with the raw amino-acid sequence, 148 residues long: Single-stranded DNA-binding protein 1-B, mitochondrial (148 aa).

The N-terminal 17 residues, 1 to 17, are a transit peptide targeting the mitochondrion; it reads MFHRPVLQVFRQFARCQ. The SSB domain maps to 30-142; sequence MNKVQLLGRV…IIADNIIFLT (113 aa).

In terms of assembly, homotetramer.

It localises to the mitochondrion. The protein localises to the mitochondrion matrix. It is found in the mitochondrion nucleoid. In terms of biological role, binds preferentially and cooperatively to pyrimidine rich single-stranded DNA (ss-DNA). Required to maintain the copy number of mitochondrial DNA (mtDNA) and plays crucial roles during mtDNA replication that stimulate activity of the DNA polymerase at the replication fork. May also function in mtDNA repair. This chain is Single-stranded DNA-binding protein 1-B, mitochondrial (ssbp1-b), found in Xenopus laevis (African clawed frog).